The sequence spans 492 residues: Protein adenylyltransferase Fic (492 aa).

Residues Met-1–Gln-17 show a composition bias toward low complexity. Residues Met-1–Pro-21 are disordered. Residues Leu-33–Ser-55 traverse the membrane as a helical segment. 2 TPR repeats span residues Ala-118–His-151 and Pro-152–Asn-186. An Inhibitory (S/T)XXXE(G/N) motif motif is present at residues Ser-243 to Gly-248. ATP-binding positions include Glu-247 and Val-328–His-331. The region spanning Ile-297 to Asp-432 is the Fido domain. His-375 is an active-site residue. ATP contacts are provided by residues Asp-379 to Arg-386, Tyr-411 to Tyr-412, and Asn-419.

It belongs to the fic family. As to quaternary structure, homodimer.

It is found in the membrane. It carries out the reaction L-tyrosyl-[protein] + ATP = O-(5'-adenylyl)-L-tyrosyl-[protein] + diphosphate. It catalyses the reaction L-threonyl-[protein] + ATP = 3-O-(5'-adenylyl)-L-threonyl-[protein] + diphosphate. The catalysed reaction is 3-O-(5'-adenylyl)-L-threonyl-[protein] + H2O = L-threonyl-[protein] + AMP + H(+). Its activity is regulated as follows. The side chain of Glu-247 determines which of the two opposing activities (AMPylase or de-AMPylase) will take place. In response to endoplasmic reticulum stress, mediates de-AMPylase activity. Adenylyltransferase activity is inhibited by the inhibitory helix present at the N-terminus: Glu-247 binds ATP and competes with ATP-binding at Arg-386, thereby preventing adenylyltransferase activity. In unstressed cells, disengagement of Glu-247 promotes adenylyltransferase activity. Activation dissociates ATP-binding from Glu-247, allowing ordered binding of the entire ATP moiety with the alpha-phosphate in an orientation that is productive for accepting an incoming target hydroxyl side chain. In terms of biological role, protein that can both mediate the addition of adenosine 5'-monophosphate (AMP) to specific residues of target proteins (AMPylation), and the removal of the same modification from target proteins (de-AMPylation), depending on the context. The side chain of Glu-247 determines which of the two opposing activities (AMPylase or de-AMPylase) will take place. Acts as a key regulator of the unfolded protein response (UPR) by mediating AMPylation or de-AMPylation of Hsc70-3/BiP. In unstressed cells, acts as an adenylyltransferase by mediating AMPylation of Hsc70-3/BiP at 'Thr-518', thereby inactivating it. In response to endoplasmic reticulum stress, acts as a phosphodiesterase by mediating removal of ATP (de-AMPylation) from Hsc70-3/BiP at 'Thr-518', leading to restore HSPA5/BiP activity. The chain is Protein adenylyltransferase Fic from Drosophila simulans (Fruit fly).